A 237-amino-acid polypeptide reads, in one-letter code: MRKVTLVFSAIAFAFSLNGVVQAKVQMPESVSSGVTTVELSQRQAVHWVSVEQIEKSLQDQPPMAIGFDIDDTVLFSSPGFYRGKLKYSPNDNSYLKNPAFWEKMNNEWDEFSMPKQIGIELVQMHLKRGDNIYFITGRTKTKTETVTKYLQEDLHIPADKMNVVIFAGDDPGKNNKISWMKEHKLKLYYGDADADIAAAHELNIRGIRILRASNSSYQPLPKAGRFGEEVVIKSEY.

The signal sequence occupies residues 1 to 23 (MRKVTLVFSAIAFAFSLNGVVQA). D69 acts as the Nucleophile in catalysis. Mg(2+) contacts are provided by D69 and D71. Residue D71 is the Proton donor of the active site. Residues 137–138 (TG) and K177 each bind substrate. A Mg(2+)-binding site is contributed by D192.

Belongs to the class B bacterial acid phosphatase family. In terms of assembly, homotetramer. It depends on Mg(2+) as a cofactor.

It is found in the periplasm. The catalysed reaction is a phosphate monoester + H2O = an alcohol + phosphate. Its function is as follows. Dephosphorylates several organic phosphate monoesters. Also has a phosphotransferase activity catalyzing the transfer of low-energy phosphate groups from organic phosphate monoesters to free hydroxyl groups of various organic compounds. This chain is Class B acid phosphatase, found in Xenorhabdus bovienii (strain SS-2004) (Xenorhabdus nematophila subsp. bovienii).